We begin with the raw amino-acid sequence, 291 residues long: MKRVILFLLTNFAVMLVLSVTARILGVDRFLTSNGLNMGMLLVFAALIGFGGSFISLLMSKTMAKWSTGAQVIKQPSSQEEVWLVETVRRLSTKAGFAMPEVAIYDGAPNAFATGPSKSRSLVAVSTGLLHSMDRKQVEAVLAHEVSHINNGDMVTLTLIQGVLNTFVIFLSRIIAYAVDSFLRRDEDESGSPGIGYWISSIACEILFGILASIVVMFFSRKREYRADAGAAALMGDRRPMIDALRALGNLDAGQLPKEMAASGIAGGGMMALFSSHPPLESRIAALESAR.

The next 2 membrane-spanning stretches (helical) occupy residues 4–24 (VILF…TARI) and 38–58 (MGML…ISLL). Zn(2+) is bound at residue H144. Residue E145 is part of the active site. H148 is a Zn(2+) binding site. 2 consecutive transmembrane segments (helical) span residues 159–179 (LIQG…AYAV) and 199–219 (ISSI…VMFF). Position 224 (E224) interacts with Zn(2+).

Belongs to the peptidase M48B family. Requires Zn(2+) as cofactor.

The protein localises to the cell inner membrane. In Pelodictyon phaeoclathratiforme (strain DSM 5477 / BU-1), this protein is Protease HtpX homolog.